The chain runs to 289 residues: Complement C1q tumor necrosis factor-related protein 7 (289 aa).

The N-terminal stretch at 1–16 (MIVLLYVTSLAICASG) is a signal peptide. Positions 36 to 134 (IPGLPGPPGP…GDRGDQGDPG (99 aa)) are disordered. In terms of domain architecture, Collagen-like spans 38–139 (GLPGPPGPPG…QGDPGLPGVC (102 aa)). Over residues 48-61 (ANGSPGPHGRIGLP) the composition is skewed to low complexity. Basic and acidic residues predominate over residues 63 to 76 (RDGRDGRKGEKGEK). The segment covering 78 to 91 (TAGLKGKTGPLGLA) has biased composition (low complexity). Positions 93-102 (EKGDQGETGK) are enriched in basic and acidic residues. The region spanning 143-279 (SIVLKSAFSV…GFLLYVDTDY (137 aa)) is the C1q domain.

Its subcellular location is the secreted. The polypeptide is Complement C1q tumor necrosis factor-related protein 7 (C1qtnf7) (Mus musculus (Mouse)).